A 314-amino-acid chain; its full sequence is Cyclin-dependent kinase 2 (314 aa).

A Protein kinase domain is found at 8–287 (FQRAEKIGEG…AKDALQHAYF (280 aa)). ATP is bound by residues 14–22 (IGEGTYGIV) and Lys37. At Thr18 the chain carries Phosphothreonine. A Phosphotyrosine modification is found at Tyr19. The active-site Proton acceptor is Asp130. Phosphotyrosine is present on Tyr162. Thr163 carries the phosphothreonine modification.

This sequence belongs to the protein kinase superfamily. CMGC Ser/Thr protein kinase family. CDC2/CDKX subfamily. Interacts with cyclin CycG.

The enzyme catalyses L-seryl-[protein] + ATP = O-phospho-L-seryl-[protein] + ADP + H(+). The catalysed reaction is L-threonyl-[protein] + ATP = O-phospho-L-threonyl-[protein] + ADP + H(+). It catalyses the reaction [DNA-directed RNA polymerase] + ATP = phospho-[DNA-directed RNA polymerase] + ADP + H(+). Like Cdk1, could play a key role in the control of the eukaryotic cell cycle. This is Cyclin-dependent kinase 2 from Drosophila melanogaster (Fruit fly).